Reading from the N-terminus, the 547-residue chain is 4-coumarate-CoA ligase 1 (547 aa).

ATP contacts are provided by residues 190-194 (SSGTT), H238, 310-312 (AAP), 332-333 (QG), T337, D421, R436, and K527. Positions 263–332 (EIVRLMELVE…EKLPNAKLGQ (70 aa)) are SBD1. The SBD2 stretch occupies residues 333 to 400 (GYGMTEAGPV…IRGNQIMKGY (68 aa)).

It belongs to the ATP-dependent AMP-binding enzyme family. In terms of tissue distribution, mostly expressed in stems, and, to a lower extent, in bulbs.

The enzyme catalyses (E)-4-coumarate + ATP + CoA = (E)-4-coumaroyl-CoA + AMP + diphosphate. It functions in the pathway phytoalexin biosynthesis; 3,4',5-trihydroxystilbene biosynthesis; 3,4',5-trihydroxystilbene from trans-4-coumarate: step 1/2. In terms of biological role, produces CoA thioesters of a variety of hydroxy- and methoxy-substituted cinnamic acids, which are used to synthesize several phenylpropanoid-derived compounds, including anthocyanins, flavonoids, isoflavonoids, coumarins, lignin, suberin and wall-bound phenolics. The sequence is that of 4-coumarate-CoA ligase 1 from Narcissus pseudonarcissus (Daffodil).